Reading from the N-terminus, the 179-residue chain is tRNA-splicing endonuclease (179 aa).

Residues tyrosine 115, histidine 123, and lysine 154 contribute to the active site.

This sequence belongs to the tRNA-intron endonuclease family. Archaeal short subfamily. Homotetramer; although the tetramer contains four active sites, only two participate in the cleavage. Therefore, it should be considered as a dimer of dimers.

The enzyme catalyses pretRNA = a 3'-half-tRNA molecule with a 5'-OH end + a 5'-half-tRNA molecule with a 2',3'-cyclic phosphate end + an intron with a 2',3'-cyclic phosphate and a 5'-hydroxyl terminus.. Endonuclease that removes tRNA introns. Cleaves pre-tRNA at the 5'- and 3'-splice sites to release the intron. The products are an intron and two tRNA half-molecules bearing 2',3' cyclic phosphate and 5'-OH termini. Recognizes a pseudosymmetric substrate in which 2 bulged loops of 3 bases are separated by a stem of 4 bp. This Methanopyrus kandleri (strain AV19 / DSM 6324 / JCM 9639 / NBRC 100938) protein is tRNA-splicing endonuclease.